A 116-amino-acid chain; its full sequence is Protein Wnt-5b (116 aa).

A lipid anchor (O-palmitoleoyl serine; by PORCN) is attached at Ser1. Asn69 and Asn83 each carry an N-linked (GlcNAc...) asparagine glycan. A disulfide bridge links Cys82 with Cys97.

It belongs to the Wnt family. Post-translationally, palmitoleoylation is required for efficient binding to frizzled receptors. Depalmitoleoylation leads to Wnt signaling pathway inhibition.

It localises to the secreted. The protein resides in the extracellular space. Its subcellular location is the extracellular matrix. Ligand for members of the frizzled family of seven transmembrane receptors. Probable developmental protein. May be a signaling molecule which affects the development of discrete regions of tissues. Is likely to signal over only few cell diameters. In Plestiodon skiltonianus (Western skink), this protein is Protein Wnt-5b (WNT-5B).